The following is a 28-amino-acid chain: Conotoxin Cl9b (28 aa).

4-hydroxyproline is present on residues proline 17 and proline 28.

In terms of processing, contains 3 disulfide bonds. As to expression, expressed by the venom duct.

Its subcellular location is the secreted. The protein is Conotoxin Cl9b of Californiconus californicus (California cone).